Reading from the N-terminus, the 939-residue chain is Protein translocase subunit SecA (939 aa).

Residues Gln-85, 103–107 (GEGKT), and Asp-504 each bind ATP. A disordered region spans residues 850–939 (PVQDGAERPS…KGGGGRRRKK (90 aa)). Positions 854-864 (GAERPSLEKEG) are enriched in basic and acidic residues. The span at 924 to 939 (ERRKAQKGGGGRRRKK) shows a compositional bias: basic residues.

The protein belongs to the SecA family. As to quaternary structure, monomer and homodimer. Part of the essential Sec protein translocation apparatus which comprises SecA, SecYEG and auxiliary proteins SecDF. Other proteins may also be involved.

It is found in the cell membrane. Its subcellular location is the cytoplasm. The catalysed reaction is ATP + H2O + cellular proteinSide 1 = ADP + phosphate + cellular proteinSide 2.. In terms of biological role, part of the Sec protein translocase complex. Interacts with the SecYEG preprotein conducting channel. Has a central role in coupling the hydrolysis of ATP to the transfer of proteins into and across the cell membrane, serving as an ATP-driven molecular motor driving the stepwise translocation of polypeptide chains across the membrane. The polypeptide is Protein translocase subunit SecA (Streptomyces griseus subsp. griseus (strain JCM 4626 / CBS 651.72 / NBRC 13350 / KCC S-0626 / ISP 5235)).